A 363-amino-acid chain; its full sequence is MTVKPEGRKMLRIEKKNAESPIEQKPRWIRNQVRTGPGYEDMKSRVTGASLHTVCQEAGCPNIHECWESREATFLIGGDKCTRRCDFCDIATGKPAELDRDEPRRVAENIQEMDLNYTTITGVTRDDLPDEGAWLYAEVVRKIHELNPNTGVENLTPDFSGKPDLLQEVFEARPEVFAHNLETVPRIFKRIRPAFRYERSLDVIRQAHDFGLITKSNLILGMGETAEEIEEALRDLRSAGCDIITITQYLRPGPRFHPIERWVRPEEFVEHSKLAKELGFGGVMSGPLVRSSYRAGRLYVQAMEARGLELPENLKHLAETSQGATAQEASTLLEKYGPSEETPVTTRMAKTPAQSNSVAATIR.

The [4Fe-4S] cluster site is built by C55, C60, C66, C81, C85, C88, and S292. Residues 67 to 281 enclose the Radical SAM core domain; the sequence is WESREATFLI…SKLAKELGFG (215 aa). Residues 338–363 form a disordered region; that stretch reads PSEETPVTTRMAKTPAQSNSVAATIR. Over residues 352–363 the composition is skewed to polar residues; the sequence is PAQSNSVAATIR.

It belongs to the radical SAM superfamily. Lipoyl synthase family. Requires [4Fe-4S] cluster as cofactor.

Its subcellular location is the cytoplasm. The enzyme catalyses [[Fe-S] cluster scaffold protein carrying a second [4Fe-4S](2+) cluster] + N(6)-octanoyl-L-lysyl-[protein] + 2 oxidized [2Fe-2S]-[ferredoxin] + 2 S-adenosyl-L-methionine + 4 H(+) = [[Fe-S] cluster scaffold protein] + N(6)-[(R)-dihydrolipoyl]-L-lysyl-[protein] + 4 Fe(3+) + 2 hydrogen sulfide + 2 5'-deoxyadenosine + 2 L-methionine + 2 reduced [2Fe-2S]-[ferredoxin]. It functions in the pathway protein modification; protein lipoylation via endogenous pathway; protein N(6)-(lipoyl)lysine from octanoyl-[acyl-carrier-protein]: step 2/2. Its function is as follows. Catalyzes the radical-mediated insertion of two sulfur atoms into the C-6 and C-8 positions of the octanoyl moiety bound to the lipoyl domains of lipoate-dependent enzymes, thereby converting the octanoylated domains into lipoylated derivatives. In Corynebacterium aurimucosum (strain ATCC 700975 / DSM 44827 / CIP 107346 / CN-1) (Corynebacterium nigricans), this protein is Lipoyl synthase.